The following is a 186-amino-acid chain: Tumor necrosis factor alpha-induced protein 8-like protein 1 (186 aa).

It belongs to the TNFAIP8 family.

Its subcellular location is the cytoplasm. This chain is Tumor necrosis factor alpha-induced protein 8-like protein 1 (TNFAIP8L1), found in Gallus gallus (Chicken).